The following is a 143-amino-acid chain: MVKLEELDFKPKPIDEHFLENDKDYPVTGQHNGHDVRAEGMQRLDADGKPYPTKLGIHGTHVAVDWDCCIADGACMDVCPVNLYEWNLNPGKSGTGNDHKIQKGSEEWNKYRTDKCDPVRESDCIFCMACESVCPVRAIKITP.

The N-terminal extension stretch occupies residues 13 to 60 (PIDEHFLENDKDYPVTGQHNGHDVRAEGMQRLDADGKPYPTKLGIHGT). Residues H31, H34, and H58 each contribute to the Zn(2+) site. 2 consecutive 4Fe-4S ferredoxin-type domains span residues 60–89 (THVA…WNLN) and 115–143 (KCDP…KITP). Residues C69 and C75 each contribute to the [3Fe-4S] cluster site. C79 contacts [4Fe-4S] cluster. A Zn(2+)-binding site is contributed by D117. [4Fe-4S] cluster is bound by residues C124, C127, and C130. C134 lines the [3Fe-4S] cluster pocket.

It depends on [3Fe-4S] cluster as a cofactor. Requires [4Fe-4S] cluster as cofactor. Zn(2+) is required as a cofactor.

Its function is as follows. Ferredoxins are iron-sulfur proteins that transfer electrons in a wide variety of metabolic reactions. In Thermoplasma acidophilum (strain ATCC 25905 / DSM 1728 / JCM 9062 / NBRC 15155 / AMRC-C165), this protein is Zinc-containing ferredoxin (zfx).